We begin with the raw amino-acid sequence, 421 residues long: Membrane-associated protein UidC (421 aa).

Positions 1 to 23 (MRKIVAMAVICLTAASGLTSAYA) are cleaved as a signal peptide.

This sequence belongs to the outer membrane porin (Opr) (TC 1.B.25) family.

Its subcellular location is the cell outer membrane. Enhances the activity of the UidB (GusB) glucuronide transporter, on its own however it has no transport activity. Glucuronide transport does not occur in strain K12 due to a variant at position 100 of the UidB (GusB, AC P0CE44, AC P0CE45) protein. The protein is Membrane-associated protein UidC (uidC) of Escherichia coli (strain K12).